The primary structure comprises 239 residues: Probable transcriptional regulatory protein BT9727_0453 (239 aa).

It belongs to the TACO1 family. YeeN subfamily.

The protein localises to the cytoplasm. The protein is Probable transcriptional regulatory protein BT9727_0453 of Bacillus thuringiensis subsp. konkukian (strain 97-27).